The following is a 106-amino-acid chain: UPF0145 protein Nmul_A0734 (106 aa).

Belongs to the UPF0145 family.

This chain is UPF0145 protein Nmul_A0734, found in Nitrosospira multiformis (strain ATCC 25196 / NCIMB 11849 / C 71).